A 212-amino-acid polypeptide reads, in one-letter code: Large ribosomal subunit protein uL3 (212 aa).

Residues 134 to 155 form a disordered region; it reads RNSHGNSLSHRAPGSIGQNQSP. Gln153 is subject to N5-methylglutamine.

Belongs to the universal ribosomal protein uL3 family. As to quaternary structure, part of the 50S ribosomal subunit. Forms a cluster with proteins L14 and L19. Post-translationally, methylated by PrmB.

Functionally, one of the primary rRNA binding proteins, it binds directly near the 3'-end of the 23S rRNA, where it nucleates assembly of the 50S subunit. The polypeptide is Large ribosomal subunit protein uL3 (Pseudoalteromonas atlantica (strain T6c / ATCC BAA-1087)).